We begin with the raw amino-acid sequence, 442 residues long: Tubulin beta chain (442 aa).

Residues Gln-11, Glu-67, Ser-136, Gly-140, Thr-141, Gly-142, and Asn-202 each coordinate GTP. Glu-67 provides a ligand contact to Mg(2+).

This sequence belongs to the tubulin family. In terms of assembly, dimer of alpha and beta chains. A typical microtubule is a hollow water-filled tube with an outer diameter of 25 nm and an inner diameter of 15 nM. Alpha-beta heterodimers associate head-to-tail to form protofilaments running lengthwise along the microtubule wall with the beta-tubulin subunit facing the microtubule plus end conferring a structural polarity. Microtubules usually have 13 protofilaments but different protofilament numbers can be found in some organisms and specialized cells. Mg(2+) serves as cofactor.

It is found in the cytoplasm. It localises to the cytoskeleton. In terms of biological role, tubulin is the major constituent of microtubules, a cylinder consisting of laterally associated linear protofilaments composed of alpha- and beta-tubulin heterodimers. Microtubules grow by the addition of GTP-tubulin dimers to the microtubule end, where a stabilizing cap forms. Below the cap, tubulin dimers are in GDP-bound state, owing to GTPase activity of alpha-tubulin. This chain is Tubulin beta chain (TUBB), found in Euglena gracilis.